A 413-amino-acid chain; its full sequence is Phosphatidylcholine:ceramide cholinephosphotransferase 1 (413 aa).

An SAM domain is found at 7 to 70 (WSPKKVADWL…LDMIETLKME (64 aa)). At serine 8 the chain carries Phosphoserine. The next 5 membrane-spanning stretches (helical) occupy residues 136 to 156 (FLAF…ISVV), 184 to 204 (FSIC…QWLL), 215 to 235 (FFCI…VTTL), 276 to 296 (MCGD…YLFI), and 304 to 324 (LWWY…CILL). Residue histidine 285 is part of the active site. The Cytoplasmic portion of the chain corresponds to 325–413 (AHDHYTVDVV…VKYSRLVNDT (89 aa)). Residues histidine 328 and aspartate 332 contribute to the active site.

The protein belongs to the sphingomyelin synthase family. As to expression, brain, heart, kidney, liver, muscle and stomach.

It is found in the golgi apparatus membrane. It catalyses the reaction an N-acylsphing-4-enine + a 1,2-diacyl-sn-glycero-3-phosphocholine = a sphingomyelin + a 1,2-diacyl-sn-glycerol. The enzyme catalyses an N-acylsphinganine + a 1,2-diacyl-sn-glycero-3-phosphocholine = an N-acylsphinganine-1-phosphocholine + a 1,2-diacyl-sn-glycerol. The catalysed reaction is an N-acyl-(4R)-4-hydroxysphinganine + a 1,2-diacyl-sn-glycero-3-phosphocholine = an N-acyl-(4R)-4-hydroxysphinganine-phosphocholine + a 1,2-diacyl-sn-glycerol. It carries out the reaction 1-(9Z-octadecenoyl)-2-acyl-sn-3-glycerol + a sphingomyelin = a 1-(9Z-octadecenoyl)-2-acyl-sn-glycero-3-phosphocholine + an N-acylsphing-4-enine. It catalyses the reaction N-hexadecanoylsphinganine + a 1,2-diacyl-sn-glycero-3-phosphocholine = N-hexadecanoyl-sphinganine-1-phosphocholine + a 1,2-diacyl-sn-glycerol. The enzyme catalyses N-hexadecanoyl-(4R)-hydroxysphinganine + a 1,2-diacyl-sn-glycero-3-phosphocholine = N-hexadecanoyl-(4R)-hydroxysphinganine-phosphocholine + a 1,2-diacyl-sn-glycerol. The catalysed reaction is an N-acylsphing-4-enine + a 1,2-diacyl-sn-glycero-3-phosphoethanolamine = an N-acylsphing-4-enine 1-phosphoethanolamine + a 1,2-diacyl-sn-glycerol. Its pathway is sphingolipid metabolism. With respect to regulation, inhibited by bacterial PC-phospholipase C inhibitor D609. Its function is as follows. Major sphingomyelin synthase at the Golgi apparatus. Catalyzes the reversible transfer of phosphocholine moiety in sphingomyelin biosynthesis: in the forward reaction transfers phosphocholine head group of phosphatidylcholine (PC) on to ceramide (CER) to form ceramide phosphocholine (sphingomyelin, SM) and diacylglycerol (DAG) as by-product, and in the reverse reaction transfers phosphocholine from SM to DAG to form PC and CER. The direction of the reaction depends on the levels of CER and DAG in Golgi membranes. Converts the newly synthesized CER, that is transported from the endoplasmic reticulum to the trans-Golgi by the Cer transport protein (CERT), to SM. Can form a heteromeric complex with glucosylceramide synthase (GCS) increasing SMS activity and reducing glucosylceramide synthesis, a critical mechanism that controls the metabolic fate of CER in the Golgi. Does not use free phosphorylcholine or CDP-choline as donor. Can also transfer phosphoethanolamine head group of phosphatidylethanolamine (PE) on to CER to form ceramide phosphoethanolamine (CPE). Regulates receptor-mediated signal transduction via mitogenic DAG and proapoptotic CER, as well as via SM, a structural component of membrane rafts that serve as platforms for signal transduction and protein sorting. Plays a role in secretory transport via regulation of DAG pool at the Golgi apparatus and its downstream effects on PRKD1. This is Phosphatidylcholine:ceramide cholinephosphotransferase 1 (SGMS1) from Homo sapiens (Human).